Consider the following 201-residue polypeptide: Recombination protein RecR (201 aa).

The segment at 57 to 72 adopts a C4-type zinc-finger fold; that stretch reads CKLCQIYTEQPLCNIC. Positions 80-175 constitute a Toprim domain; that stretch reads TLLCVVESPA…KCSRIAHGVP (96 aa).

Belongs to the RecR family.

Functionally, may play a role in DNA repair. It seems to be involved in an RecBC-independent recombinational process of DNA repair. It may act with RecF and RecO. The polypeptide is Recombination protein RecR (Coxiella burnetii (strain RSA 493 / Nine Mile phase I)).